Here is a 226-residue protein sequence, read N- to C-terminus: ATP synthase F(0) complex subunit a (226 aa).

The next 6 helical transmembrane spans lie at 6–26 (FAPFITPTILGITTLPIIITF), 68–88 (WTLMLMSLILFIASTNLLGLL), 97–117 (QLSMNIGMAIPLWAGTVIMGF), 138–158 (IPMLIIIETISLFIQPLALAV), 164–184 (ITAGHLLIHLIGSATLALSSI), and 195–215 (ILFLLTLLEIAVAMIQAYVFT).

It belongs to the ATPase A chain family. As to quaternary structure, component of the ATP synthase complex composed at least of ATP5F1A/subunit alpha, ATP5F1B/subunit beta, ATP5MC1/subunit c (homooctomer), MT-ATP6/subunit a, MT-ATP8/subunit 8, ATP5ME/subunit e, ATP5MF/subunit f, ATP5MG/subunit g, ATP5MK/subunit k, ATP5MJ/subunit j, ATP5F1C/subunit gamma, ATP5F1D/subunit delta, ATP5F1E/subunit epsilon, ATP5PF/subunit F6, ATP5PB/subunit b, ATP5PD/subunit d, ATP5PO/subunit OSCP. ATP synthase complex consists of a soluble F(1) head domain (subunits alpha(3) and beta(3)) - the catalytic core - and a membrane F(0) domain - the membrane proton channel (subunits c, a, 8, e, f, g, k and j). These two domains are linked by a central stalk (subunits gamma, delta, and epsilon) rotating inside the F1 region and a stationary peripheral stalk (subunits F6, b, d, and OSCP). Interacts with DNAJC30; interaction is direct.

Its subcellular location is the mitochondrion inner membrane. The catalysed reaction is H(+)(in) = H(+)(out). In terms of biological role, subunit a, of the mitochondrial membrane ATP synthase complex (F(1)F(0) ATP synthase or Complex V) that produces ATP from ADP in the presence of a proton gradient across the membrane which is generated by electron transport complexes of the respiratory chain. ATP synthase complex consist of a soluble F(1) head domain - the catalytic core - and a membrane F(1) domain - the membrane proton channel. These two domains are linked by a central stalk rotating inside the F(1) region and a stationary peripheral stalk. During catalysis, ATP synthesis in the catalytic domain of F(1) is coupled via a rotary mechanism of the central stalk subunits to proton translocation. With the subunit c (ATP5MC1), forms the proton-conducting channel in the F(0) domain, that contains two crucial half-channels (inlet and outlet) that facilitate proton movement from the mitochondrial intermembrane space (IMS) into the matrix. Protons are taken up via the inlet half-channel and released through the outlet half-channel, following a Grotthuss mechanism. This Didelphis virginiana (North American opossum) protein is ATP synthase F(0) complex subunit a.